A 294-amino-acid chain; its full sequence is Bifunctional protein FolD (294 aa).

NADP(+) contacts are provided by residues 164-166, S193, and I234; that span reads GRS.

This sequence belongs to the tetrahydrofolate dehydrogenase/cyclohydrolase family. As to quaternary structure, homodimer.

It carries out the reaction (6R)-5,10-methylene-5,6,7,8-tetrahydrofolate + NADP(+) = (6R)-5,10-methenyltetrahydrofolate + NADPH. The catalysed reaction is (6R)-5,10-methenyltetrahydrofolate + H2O = (6R)-10-formyltetrahydrofolate + H(+). It participates in one-carbon metabolism; tetrahydrofolate interconversion. Its function is as follows. Catalyzes the oxidation of 5,10-methylenetetrahydrofolate to 5,10-methenyltetrahydrofolate and then the hydrolysis of 5,10-methenyltetrahydrofolate to 10-formyltetrahydrofolate. The protein is Bifunctional protein FolD of Flavobacterium psychrophilum (strain ATCC 49511 / DSM 21280 / CIP 103535 / JIP02/86).